The sequence spans 562 residues: MDYKKKVAAALAPALNEYLTDTEIYEKIEIPKESKMGDYAFPTFTLAKVLRKAPQMIASELVEKIDQDQFEKVEVAGPYINFFLDKTAFGAEVLGTVLSQKAEYGQNDDGNQGNVPIDMSSPNIAKPISMGHLRSTVIGNSLSLIMSKNGYNPIKINHLGDWGTQFGKLITAYKLWGSEEEVKADPINKLLEYYVRFHKEDQEKPELDDIARDWFKKLEDGDEEAMNLWQWFREESLKSFKQIYDKLGITFDSYKGEAFYNDKMDEIVQILEDKGLLKESQGAQVVDLEKYNLNPALIKKTDGATLYITRDLAAALYRYRTYDFNQSLYVVGAEQTNHFKQLKAVLKEMGFDWSDDVHHIPFGLITLNGKKLSTRSGRVVLLDEVLNDAVSLAKKQINDKNPDLANADTVAKEVGVGAVIFHDLKNERTNSFDFNLEDVVRFEGETGPYVQYSRARAESILRKAGDVEEFAQLNITDPKAWDTLKALQDFPNIVKRAAAQYEPSVIAKYALGLAKAFNKYYANSKILADDEEKTARLALVKSVSIVLEESLRLLGVKAPDEM.

The 'HIGH' region motif lies at 122–132 (PNIAKPISMGH).

It belongs to the class-I aminoacyl-tRNA synthetase family. In terms of assembly, monomer.

Its subcellular location is the cytoplasm. It carries out the reaction tRNA(Arg) + L-arginine + ATP = L-arginyl-tRNA(Arg) + AMP + diphosphate. This is Arginine--tRNA ligase from Pediococcus pentosaceus (strain ATCC 25745 / CCUG 21536 / LMG 10740 / 183-1w).